Here is a 4870-residue protein sequence, read N- to C-terminus: Malformin synthetase mlfA (4870 aa).

Residues 106-497 are adenylation 1; that stretch reads ERRAANRPHS…CGRADTQVKL (392 aa). A Carrier 1 domain is found at 635–711; that stretch reads LGLSQLEQEI…EASSLAEVQE (77 aa). Ser672 carries the O-(pantetheine 4'-phosphoryl)serine modification. Residues 749–1133 form a condensation 1 region; it reads EDVFPCTTMQ…ALNTLTLLQA (385 aa). The segment at 1161–1550 is adenylation 2; that stretch reads DRWVTRQPES…GRKDTQVKLR (390 aa). The Carrier 2 domain maps to 1688 to 1765; sequence TASSKLELTL…QLAAILGEAT (78 aa). O-(pantetheine 4'-phosphoryl)serine is present on Ser1725. Disordered stretches follow at residues 1764–1794 and 1829–1859; these read ATGQ…NDGV and GSSS…VSPV. 2 stretches are compositionally biased toward low complexity: residues 1769-1792 and 1830-1846; these read ESSA…STND and SSSC…SSSS. The interval 1898–2313 is condensation 2; it reads EDIYPATALQ…GVSYRDKQTL (416 aa). The interval 2336-2728 is adenylation 3; the sequence is VRTPHAPAVF…IGRRDGQLKL (393 aa). Residues 2864–2940 form the Carrier 3 domain; sequence RPATAQEREM…QLMRHLSANG (77 aa). The residue at position 2901 (Ser2901) is an O-(pantetheine 4'-phosphoryl)serine. Condensation stretches follow at residues 2957–3422 and 3443–3862; these read WVPL…TYDQ and DIYP…EQLV. Residues 3887–4277 are adenylation 4; sequence HSSREAACAW…VGRKDNQIKF (391 aa). In terms of domain architecture, Carrier 4 spans 4411–4487; sequence MPFTAAECKM…DLAYRTANLV (77 aa). Ser4448 is subject to O-(pantetheine 4'-phosphoryl)serine. A condensation 5 region spans residues 4524–4837; sequence EVLPTTSFQR…LQTIVQHQNN (314 aa).

The protein belongs to the NRP synthetase family.

It participates in secondary metabolite biosynthesis. Its function is as follows. Nonribosomal peptide synthetase; part of the gene cluster that mediates the biosynthesis of malformins, cyclic pentapeptides with a disulfide bond between 2 consecutive cysteins, that show potential anti-tumor as well as antimalarial and antitrypanosomal properties. The nonribosomal peptide synthetase mlfA is responsible of the formation of the cyclic pentapeptide. The malformin biosynthesis clusters in malformin-producing fungi also contain enzymes involved in the formation of the disulfide bond between the two consecutive cysteins within malformins, in addition to additional tailoring enzymes such as methyltransferases or oxidoreductases. They are also composed of up to 4 major facilitator superfamily transporters, and transcription factors probably involved in the regulation of the expression of those clusters. The polypeptide is Malformin synthetase mlfA (Aspergillus niger (strain ATCC 1015 / CBS 113.46 / FGSC A1144 / LSHB Ac4 / NCTC 3858a / NRRL 328 / USDA 3528.7)).